Reading from the N-terminus, the 294-residue chain is Xyloglucan endotransglucosylase protein 34 (294 aa).

Residues 1–22 (MAAAYPWTLFLGMLVMVSGTMG) form the signal peptide. The 199-residue stretch at 23–221 (AALRKPVDVA…WSKAPFIASY (199 aa)) folds into the GH16 domain. Glu107 functions as the Nucleophile in the catalytic mechanism. Glu111 (proton donor) is an active-site residue. Residue Glu111 participates in xyloglucan binding. Asn115 carries an N-linked (GlcNAc...) asparagine glycan. Xyloglucan-binding positions include 124 to 126 (QTN), 134 to 136 (DRE), 200 to 201 (DW), and Gly205. Intrachain disulfides connect Cys229–Cys238 and Cys275–Cys288. Arg280 is a binding site for xyloglucan.

The protein belongs to the glycosyl hydrolase 16 family. XTH group 1 subfamily. In terms of processing, contains at least one intrachain disulfide bond essential for its enzymatic activity. Post-translationally, N-glycosylated. Contains N-acetylglucosamine and mannose. Glycosylation is not essential for its catalytic activity. In terms of tissue distribution, expressed in mature gelatinous (G) cell wall layer of the tension wood fibers. Highly expressed in the outer zone of the G layer close to the secondary S2 layer. Not expressed in the mature walls of the ray cells or vessel elements (at protein level). Highest expression in both the phloem/cambium and differentiating xylem of the mature stem containing primarily secondary cell wall forming cells, in root tips and young roots. Expressed at low levels in apical bud.

The protein localises to the secreted. Its subcellular location is the cell wall. It is found in the extracellular space. The protein resides in the apoplast. It localises to the cytoplasm. It carries out the reaction breaks a beta-(1-&gt;4) bond in the backbone of a xyloglucan and transfers the xyloglucanyl segment on to O-4 of the non-reducing terminal glucose residue of an acceptor, which can be a xyloglucan or an oligosaccharide of xyloglucan.. Functionally, catalyzes xyloglucan endotransglycosylation (XET). Cleaves and religates xyloglucan polymers. Does not catalyze xyloglucan endohydrolysis (XEH). Involved in early phases of secondary (S) cell wall formation in fibers of the xylem and phloem vascular tissues of wood stems. May play a role in restructuring primary cell walls, possibly creating and reinforcing the connections between the primary and S cell wall layers. Functions in the gelatinous (G) layers of the tension wood fibers that are involved in bending of the wood stems. May play a role in G fiber shrinking by repairing broken xyloglucan cross-links between G and S2 cell wall layers via its XET activity to maintain connections between the layers. The polypeptide is Xyloglucan endotransglucosylase protein 34 (Populus tremula x Populus tremuloides (Hybrid aspen)).